A 173-amino-acid polypeptide reads, in one-letter code: NADH-ubiquinone oxidoreductase chain 6 (173 aa).

5 consecutive transmembrane segments (helical) span residues 1 to 21 (MTYF…AVAS), 25 to 45 (PYFA…VLVG), 53 to 73 (LVLF…SAAL), 87 to 107 (VLGY…FFWG), and 141 to 161 (GGML…VLEL).

This sequence belongs to the complex I subunit 6 family.

It localises to the mitochondrion membrane. It catalyses the reaction a ubiquinone + NADH + 5 H(+)(in) = a ubiquinol + NAD(+) + 4 H(+)(out). Its function is as follows. Core subunit of the mitochondrial membrane respiratory chain NADH dehydrogenase (Complex I) that is believed to belong to the minimal assembly required for catalysis. Complex I functions in the transfer of electrons from NADH to the respiratory chain. The immediate electron acceptor for the enzyme is believed to be ubiquinone. This Carassius auratus (Goldfish) protein is NADH-ubiquinone oxidoreductase chain 6 (MT-ND6).